Here is a 78-residue protein sequence, read N- to C-terminus: Small integral membrane protein 1 (78 aa).

N-acetylmethionine is present on methionine 1. Residues 1-18 (MQPQESHVHYSRWEDGSR) show a composition bias toward basic and acidic residues. The segment at 1–20 (MQPQESHVHYSRWEDGSRDG) is disordered. The Cytoplasmic segment spans residues 1–46 (MQPQESHVHYSRWEDGSRDGVSLGAVSSTEEASRCRRISQRLCTGK). Phosphoserine occurs at positions 6, 17, 22, and 27. A helical; Signal-anchor for type II membrane protein membrane pass occupies residues 47–67 (LGIAMKVLGGVALFWIIFILG). The Extracellular portion of the chain corresponds to 68–78 (YLTGYYVHKCK). The tract at residues 68 to 78 (YLTGYYVHKCK) is displays the Vel antigen.

This sequence belongs to the SMIM1 family. Homooligomer; disulfide-linked. In terms of tissue distribution, highly expressed in the bone marrow and expressed at lower levels in non-hematopoietic tissues. Highly expressed in erythroleukemia cell lines. Up-regulated in CD34+ hematopoietic progenitors cultured toward red blood cells.

The protein resides in the cell membrane. Regulator of red blood cell formation. This Homo sapiens (Human) protein is Small integral membrane protein 1.